A 257-amino-acid chain; its full sequence is Phosphate import ATP-binding protein PstB (257 aa).

In terms of domain architecture, ABC transporter spans 4–252 (LKLNDVNIYY…PDNKETEDYI (249 aa)). 36–43 (GPSGCGKS) contributes to the ATP binding site.

It belongs to the ABC transporter superfamily. Phosphate importer (TC 3.A.1.7) family. In terms of assembly, the complex is composed of two ATP-binding proteins (PstB), two transmembrane proteins (PstC and PstA) and a solute-binding protein (PstS).

It localises to the cell membrane. It catalyses the reaction phosphate(out) + ATP + H2O = ADP + 2 phosphate(in) + H(+). Functionally, part of the ABC transporter complex PstSACB involved in phosphate import. Responsible for energy coupling to the transport system. The chain is Phosphate import ATP-binding protein PstB from Corynebacterium efficiens (strain DSM 44549 / YS-314 / AJ 12310 / JCM 11189 / NBRC 100395).